Consider the following 304-residue polypeptide: MAFHKLVKNSAYYSRFQTKFKRRRQGKTDYYARKRLITQAKNKYNAPKYRLVVRFTNRDIITQMVTSEINGDKIFAAAYSHELRAYGINHGLTNWAAAYATGLLLARRVLAKLGLDKTFTGVEEPNGEYTLTEAAETEDGERRPFKAILDVGLARTSTGARVFGVMKGASDGGIFIPHSENRFPGYDIETEELDTEVLKKYIYGGHVAEYMETLADDDEERYKSQFVKYIEDDVEADSLEELYAEAHKQIRADPFRKYVSDAPKKSKEEWKAESLKYKKAKLSREERKARVEAKIKQLLAEQDE.

Belongs to the universal ribosomal protein uL18 family. Component of a hexameric 5S RNP precursor complex, composed of 5S RNA, RRS1, RPF2, RPL5, RPL11 and SYO1; this complex acts as a precursor for ribosome assembly.

Its subcellular location is the cytoplasm. In terms of biological role, component of the ribosome, a large ribonucleoprotein complex responsible for the synthesis of proteins in the cell. The small ribosomal subunit (SSU) binds messenger RNAs (mRNAs) and translates the encoded message by selecting cognate aminoacyl-transfer RNA (tRNA) molecules. The large subunit (LSU) contains the ribosomal catalytic site termed the peptidyl transferase center (PTC), which catalyzes the formation of peptide bonds, thereby polymerizing the amino acids delivered by tRNAs into a polypeptide chain. The nascent polypeptides leave the ribosome through a tunnel in the LSU and interact with protein factors that function in enzymatic processing, targeting, and the membrane insertion of nascent chains at the exit of the ribosomal tunnel. The sequence is that of Large ribosomal subunit protein uL18 from Chaetomium thermophilum (strain DSM 1495 / CBS 144.50 / IMI 039719) (Thermochaetoides thermophila).